A 26-amino-acid polypeptide reads, in one-letter code: Nicotinic acetylcholine receptor-binding protein Mnn-1A (26 aa).

Cysteines 3 and 22 form a disulfide.

This sequence belongs to the three-finger toxin family. Short-chain subfamily. In terms of tissue distribution, expressed by the venom gland.

The protein resides in the secreted. Its function is as follows. Binds and may inhibit nicotinic acetylcholine receptors (nAChR). The sequence is that of Nicotinic acetylcholine receptor-binding protein Mnn-1A from Micrurus nigrocinctus (Central American coral snake).